We begin with the raw amino-acid sequence, 226 residues long: MSKDIVLISGLTKTFSSASEKLVIFDKLNFSIEEGKKISITGESGSGKSTFLNILGGLESADSGEIIAGSYKVHSLDEKSLTEYRSSFLGLVFQFHYLLKDFTALENVMLPALIAGRSKKEIKEKALSLLEDVKLAERKNHFPSQLSGGERQRVAVARSLINSPSLILADEPTGNLDPANAETVQNLLFSVVDKHKKTLVLVTHDQNIASMTDISYKLYKGNLEEV.

In terms of domain architecture, ABC transporter spans 6–226 (VLISGLTKTF…KLYKGNLEEV (221 aa)). 42–49 (GESGSGKS) is an ATP binding site.

This sequence belongs to the ABC transporter superfamily. Lipoprotein translocase (TC 3.A.1.125) family. In terms of assembly, the complex is composed of two ATP-binding proteins (LolD) and two transmembrane proteins (LolC and LolE).

The protein resides in the cell inner membrane. Part of the ABC transporter complex LolCDE involved in the translocation of mature outer membrane-directed lipoproteins, from the inner membrane to the periplasmic chaperone, LolA. Responsible for the formation of the LolA-lipoprotein complex in an ATP-dependent manner. The chain is Lipoprotein-releasing system ATP-binding protein LolD from Treponema denticola (strain ATCC 35405 / DSM 14222 / CIP 103919 / JCM 8153 / KCTC 15104).